The following is an 82-amino-acid chain: Small ribosomal subunit protein bS16 (82 aa).

This sequence belongs to the bacterial ribosomal protein bS16 family.

The protein is Small ribosomal subunit protein bS16 of Actinobacillus pleuropneumoniae serotype 5b (strain L20).